The sequence spans 294 residues: Cytidine deaminase (294 aa).

2 consecutive CMP/dCMP-type deaminase domains span residues 48–168 and 186–294; these read DEDA…FGPK and LTGD…VLLA. 89–91 contributes to the substrate binding site; that stretch reads NME. Zn(2+) is bound at residue H102. The Proton donor role is filled by E104. 2 residues coordinate Zn(2+): C129 and C132.

This sequence belongs to the cytidine and deoxycytidylate deaminase family. Homodimer. The cofactor is Zn(2+).

It catalyses the reaction cytidine + H2O + H(+) = uridine + NH4(+). The enzyme catalyses 2'-deoxycytidine + H2O + H(+) = 2'-deoxyuridine + NH4(+). In terms of biological role, this enzyme scavenges exogenous and endogenous cytidine and 2'-deoxycytidine for UMP synthesis. The polypeptide is Cytidine deaminase (Escherichia coli O17:K52:H18 (strain UMN026 / ExPEC)).